The primary structure comprises 424 residues: Enolase (424 aa).

Residue Gln-165 coordinates (2R)-2-phosphoglycerate. The active-site Proton donor is the Glu-207. The Mg(2+) site is built by Asp-244, Glu-283, and Asp-310. The (2R)-2-phosphoglycerate site is built by Lys-335, Arg-364, Ser-365, and Lys-386. The active-site Proton acceptor is the Lys-335.

Belongs to the enolase family. Mg(2+) is required as a cofactor.

It is found in the cytoplasm. It localises to the secreted. The protein localises to the cell surface. It carries out the reaction (2R)-2-phosphoglycerate = phosphoenolpyruvate + H2O. Its pathway is carbohydrate degradation; glycolysis; pyruvate from D-glyceraldehyde 3-phosphate: step 4/5. Functionally, catalyzes the reversible conversion of 2-phosphoglycerate (2-PG) into phosphoenolpyruvate (PEP). It is essential for the degradation of carbohydrates via glycolysis. The sequence is that of Enolase from Chlamydia felis (strain Fe/C-56) (Chlamydophila felis).